Reading from the N-terminus, the 1052-residue chain is Focal adhesion kinase 1 (1052 aa).

The tract at residues 1–27 (MAAAYLDPNLNHTPNSSTKTHLGTGME) is disordered. An N-acetylalanine modification is found at alanine 2. The residue at position 5 (tyrosine 5) is a Phosphotyrosine. Residues 10 to 21 (LNHTPNSSTKTH) are compositionally biased toward polar residues. Residue threonine 13 is modified to Phosphothreonine. Phosphoserine is present on residues serine 29 and serine 54. The FERM domain maps to 35–355 (RVLKVFHYFE…GYCRLVNGTS (321 aa)). A Glycyl lysine isopeptide (Lys-Gly) (interchain with G-Cter in SUMO) cross-link involves residue lysine 152. Tyrosine 397 is modified (phosphotyrosine; by autocatalysis). Tyrosine 407 carries the phosphotyrosine modification. In terms of domain architecture, Protein kinase spans 422–680 (IELGRCIGEG…ELKAQLSTIL (259 aa)). ATP contacts are provided by residues 428–434 (IGEGQFG), lysine 454, and 500–502 (ELC). Aspartate 546 acts as the Proton acceptor in catalysis. Residue tyrosine 570 is modified to Phosphotyrosine. 2 positions are modified to phosphotyrosine; by RET and SRC: tyrosine 576 and tyrosine 577. Serine 580 bears the Phosphoserine mark. The span at 684-697 (KAQQEERMRMESRR) shows a compositional bias: basic and acidic residues. Disordered regions lie at residues 684–734 (KAQQ…PSPQ) and 839–922 (LSRG…RSND). The interval 707–1052 (GSDEAPPKPS…LKMLGQTRPH (346 aa)) is interaction with TGFB1I1. Position 722 is a phosphoserine (serine 722). Serine 732 carries the post-translational modification Phosphoserine; by CDK5. Basic and acidic residues predominate over residues 839–849 (LSRGSIDREDG). Serine 843 is modified (phosphoserine). At tyrosine 861 the chain carries Phosphotyrosine. The span at 869–880 (PAAPPKKPPRPG) shows a compositional bias: pro residues. Phosphoserine is present on residues serine 887 and serine 910. Residues 912-1052 (PPTANLDRSN…LKMLGQTRPH (141 aa)) form an interaction with ARHGEF28 region. Threonine 914 carries the phosphothreonine modification. Tyrosine 925 is subject to Phosphotyrosine.

This sequence belongs to the protein kinase superfamily. Tyr protein kinase family. FAK subfamily. In terms of assembly, interacts (via first Pro-rich region) with CAS family members (via SH3 domain), including BCAR1, BCAR3, and CASS4. Interacts with NEDD9 (via SH3 domain). Interacts with GIT1. Interacts with SORBS1. Interacts with ARHGEF28. Interacts with SHB. Part of a complex composed of THSD1, PTK2/FAK1, TLN1 and VCL. Interacts with PXN and TLN1. Interacts with STAT1. Interacts with DCC. Interacts with WASL. Interacts with ARHGEF7. Interacts with GRB2 and GRB7. Component of a complex that contains at least FER, CTTN and PTK2/FAK1. Interacts with BMX. Interacts with TGFB1I1. Interacts with STEAP4. Interacts with ZFYVE21. Interacts with ESR1. Interacts with PIK3R1 or PIK3R2. Interacts with SRC, FGR, FLT4 and RET. Interacts with EPHA2 in resting cells; activation of EPHA2 recruits PTPN11, leading to dephosphorylation of PTK2/FAK1 and dissociation of the complex. Interacts with EPHA1 (kinase activity-dependent). Interacts with CD4; this interaction requires the presence of HIV-1 gp120. Interacts with PIAS1. Interacts with ARHGAP26 and SHC1. Interacts with RB1CC1; this inhibits PTK2/FAK1 activity and activation of downstream signaling pathways. Interacts with P53/TP53 and MDM2. Interacts with LPXN (via LD motif 3). Interacts with MISP. Interacts with CIB1 isoform 2. Interacts with CD36. Interacts with EMP2; regulates PTK2 activation and localization. Interacts with DSCAM. Interacts with AMBRA1. Interacts (when tyrosine-phosphorylated) with tensin TNS1; the interaction is increased by phosphorylation of TNS1. Post-translationally, phosphorylated on tyrosine residues upon activation, e.g. upon integrin signaling. Tyr-397 is the major autophosphorylation site, but other kinases can also phosphorylate this residue. Phosphorylation at Tyr-397 promotes interaction with SRC and SRC family members, leading to phosphorylation at Tyr-576, Tyr-577 and at additional tyrosine residues. FGR promotes phosphorylation at Tyr-397 and Tyr-576. FER promotes phosphorylation at Tyr-577, Tyr-861 and Tyr-925, even when cells are not adherent. Tyr-397, Tyr-576 and Ser-722 are phosphorylated only when cells are adherent. Phosphorylation at Tyr-397 is important for interaction with BMX, PIK3R1 and SHC1. Phosphorylation at Tyr-925 is important for interaction with GRB2. Dephosphorylated by PTPN11; PTPN11 is recruited to PTK2 via EPHA2 (tyrosine phosphorylated). Microtubule-induced dephosphorylation at Tyr-397 is crucial for the induction of focal adhesion disassembly; this dephosphorylation could be catalyzed by PTPN11 and regulated by ZFYVE21. Phosphorylation on tyrosine residues is enhanced by NTN1. In terms of processing, sumoylated; this enhances autophosphorylation. Detected in B and T-lymphocytes. Isoform 1 and isoform 6 are detected in lung fibroblasts (at protein level). Ubiquitous. Expressed in epithelial cells (at protein level).

It localises to the cell junction. It is found in the focal adhesion. Its subcellular location is the cell membrane. The protein resides in the cytoplasm. The protein localises to the perinuclear region. It localises to the cell cortex. It is found in the cytoskeleton. Its subcellular location is the microtubule organizing center. The protein resides in the centrosome. The protein localises to the nucleus. It localises to the cilium basal body. The catalysed reaction is L-tyrosyl-[protein] + ATP = O-phospho-L-tyrosyl-[protein] + ADP + H(+). Subject to autoinhibition, mediated by interactions between the FERM domain and the kinase domain. Activated by autophosphorylation at Tyr-397. This promotes interaction with SRC and phosphorylation at Tyr-576 and Tyr-577 in the kinase activation loop. Phosphorylation at Tyr-576 and Tyr-577 is required for maximal kinase activity. Inhibited by TAC544, TAE226, PF-573,228 and PF-562,271. Functionally, non-receptor protein-tyrosine kinase that plays an essential role in regulating cell migration, adhesion, spreading, reorganization of the actin cytoskeleton, formation and disassembly of focal adhesions and cell protrusions, cell cycle progression, cell proliferation and apoptosis. Required for early embryonic development and placenta development. Required for embryonic angiogenesis, normal cardiomyocyte migration and proliferation, and normal heart development. Regulates axon growth and neuronal cell migration, axon branching and synapse formation; required for normal development of the nervous system. Plays a role in osteogenesis and differentiation of osteoblasts. Functions in integrin signal transduction, but also in signaling downstream of numerous growth factor receptors, G-protein coupled receptors (GPCR), EPHA2, netrin receptors and LDL receptors. Forms multisubunit signaling complexes with SRC and SRC family members upon activation; this leads to the phosphorylation of additional tyrosine residues, creating binding sites for scaffold proteins, effectors and substrates. Regulates numerous signaling pathways. Promotes activation of phosphatidylinositol 3-kinase and the AKT1 signaling cascade. Promotes activation of MAPK1/ERK2, MAPK3/ERK1 and the MAP kinase signaling cascade. Promotes localized and transient activation of guanine nucleotide exchange factors (GEFs) and GTPase-activating proteins (GAPs), and thereby modulates the activity of Rho family GTPases. Signaling via CAS family members mediates activation of RAC1. Phosphorylates NEDD9 following integrin stimulation. Recruits the ubiquitin ligase MDM2 to P53/TP53 in the nucleus, and thereby regulates P53/TP53 activity, P53/TP53 ubiquitination and proteasomal degradation. Phosphorylates SRC; this increases SRC kinase activity. Phosphorylates ACTN1, ARHGEF7, GRB7, RET and WASL. Promotes phosphorylation of PXN and STAT1; most likely PXN and STAT1 are phosphorylated by a SRC family kinase that is recruited to autophosphorylated PTK2/FAK1, rather than by PTK2/FAK1 itself. Promotes phosphorylation of BCAR1; GIT2 and SHC1; this requires both SRC and PTK2/FAK1. Promotes phosphorylation of BMX and PIK3R1. Isoform 6 (FRNK) does not contain a kinase domain and inhibits PTK2/FAK1 phosphorylation and signaling. Its enhanced expression can attenuate the nuclear accumulation of LPXN and limit its ability to enhance serum response factor (SRF)-dependent gene transcription. Isoform 6 (FRNK) does not contain a kinase domain and inhibits PTK2/FAK1 phosphorylation and signaling. Its enhanced expression can attenuate the nuclear accumulation of LPXN and limit its ability to enhance serum response factor (SRF)-dependent gene transcription. This chain is Focal adhesion kinase 1, found in Homo sapiens (Human).